The following is a 236-amino-acid chain: Uridylate kinase (236 aa).

Residue 9-12 participates in ATP binding; it reads KFSG. Residues 17–22 form an involved in allosteric activation by GTP region; sequence GNSGFG. Gly51 is a binding site for UMP. The ATP site is built by Gly52 and Arg56. UMP contacts are provided by residues Asp72 and 133-140; that span reads TGNPFFTT. Residues Thr160, Tyr166, and Asp169 each contribute to the ATP site.

This sequence belongs to the UMP kinase family. As to quaternary structure, homohexamer.

It localises to the cytoplasm. The enzyme catalyses UMP + ATP = UDP + ADP. It participates in pyrimidine metabolism; CTP biosynthesis via de novo pathway; UDP from UMP (UMPK route): step 1/1. Its activity is regulated as follows. Allosterically activated by GTP. Inhibited by UTP. Catalyzes the reversible phosphorylation of UMP to UDP. This chain is Uridylate kinase, found in Helicobacter hepaticus (strain ATCC 51449 / 3B1).